Reading from the N-terminus, the 534-residue chain is Arginine--tRNA ligase (534 aa).

The 'HIGH' region motif lies at 120-130 (ANPTGFLHLGH).

The protein belongs to the class-I aminoacyl-tRNA synthetase family. Monomer.

It is found in the cytoplasm. The catalysed reaction is tRNA(Arg) + L-arginine + ATP = L-arginyl-tRNA(Arg) + AMP + diphosphate. The chain is Arginine--tRNA ligase from Mesomycoplasma hyopneumoniae (strain 232) (Mycoplasma hyopneumoniae).